The following is a 191-amino-acid chain: MGRYAIEPENPAKSCKARGEDLRVHFKNTRETAQAIKGMHLKKALRYLNDVIEKKQIIPFRRFSGGVGRKAQAKNFKTPGSQGRWPKKSAQFLIQLLRNAESNAEVKMLNTDALVIDHIQVNRAAHLRRRTYRAHGRINPYMTSPCHIEMFLVEKDEAVPKGEDDTAQKKKVSQKKLKKQKLKAALSGGAD.

Residues 159–168 (VPKGEDDTAQ) are compositionally biased toward basic and acidic residues. Residues 159-191 (VPKGEDDTAQKKKVSQKKLKKQKLKAALSGGAD) form a disordered region. Residues 169-182 (KKKVSQKKLKKQKL) show a composition bias toward basic residues.

This sequence belongs to the universal ribosomal protein uL22 family.

The polypeptide is Large ribosomal subunit protein uL22 (RPL17) (Suberites domuncula (Sponge)).